An 88-amino-acid chain; its full sequence is Small ribosomal subunit protein uS15 (88 aa).

Belongs to the universal ribosomal protein uS15 family. In terms of assembly, part of the 30S ribosomal subunit. Forms a bridge to the 50S subunit in the 70S ribosome, contacting the 23S rRNA.

Its function is as follows. One of the primary rRNA binding proteins, it binds directly to 16S rRNA where it helps nucleate assembly of the platform of the 30S subunit by binding and bridging several RNA helices of the 16S rRNA. Functionally, forms an intersubunit bridge (bridge B4) with the 23S rRNA of the 50S subunit in the ribosome. The polypeptide is Small ribosomal subunit protein uS15 (Leptospira biflexa serovar Patoc (strain Patoc 1 / Ames)).